Here is a 506-residue protein sequence, read N- to C-terminus: Maturase K (506 aa).

Belongs to the intron maturase 2 family. MatK subfamily.

It localises to the plastid. It is found in the chloroplast. Its function is as follows. Usually encoded in the trnK tRNA gene intron. Probably assists in splicing its own and other chloroplast group II introns. This is Maturase K from Empetrum nigrum (Black crowberry).